We begin with the raw amino-acid sequence, 571 residues long: Phosphoenolpyruvate-protein phosphotransferase (571 aa).

The Tele-phosphohistidine intermediate role is filled by His207. Arg312 and Arg348 together coordinate phosphoenolpyruvate. Residues Glu435 and Asp459 each coordinate Mg(2+). Phosphoenolpyruvate-binding positions include 458 to 459 (ND) and Arg469. Cys506 serves as the catalytic Proton donor.

This sequence belongs to the PEP-utilizing enzyme family. Homodimer. Mg(2+) is required as a cofactor.

It is found in the cytoplasm. It catalyses the reaction L-histidyl-[protein] + phosphoenolpyruvate = N(pros)-phospho-L-histidyl-[protein] + pyruvate. Functionally, general (non sugar-specific) component of the phosphoenolpyruvate-dependent sugar phosphotransferase system (sugar PTS). This major carbohydrate active-transport system catalyzes the phosphorylation of incoming sugar substrates concomitantly with their translocation across the cell membrane. Enzyme I transfers the phosphoryl group from phosphoenolpyruvate (PEP) to the phosphoryl carrier protein (HPr). The sequence is that of Phosphoenolpyruvate-protein phosphotransferase (ptsI) from Chlamydia trachomatis serovar D (strain ATCC VR-885 / DSM 19411 / UW-3/Cx).